The chain runs to 295 residues: Glycine--tRNA ligase alpha subunit (295 aa).

Belongs to the class-II aminoacyl-tRNA synthetase family. In terms of assembly, tetramer of two alpha and two beta subunits.

It localises to the cytoplasm. It carries out the reaction tRNA(Gly) + glycine + ATP = glycyl-tRNA(Gly) + AMP + diphosphate. This is Glycine--tRNA ligase alpha subunit from Rhodospirillum rubrum (strain ATCC 11170 / ATH 1.1.1 / DSM 467 / LMG 4362 / NCIMB 8255 / S1).